Here is a 454-residue protein sequence, read N- to C-terminus: Probable N-octanoylanthranilate hydrolase AqdA2 (454 aa).

S185 acts as the Acyl-ester intermediate in catalysis. Residues E306 and H379 each act as charge relay system in the active site.

Belongs to the type-B carboxylesterase/lipase family.

The catalysed reaction is N-octanoylanthranilate + H2O = anthranilate + octanoate + H(+). In terms of biological role, involved in the degradation of the Pseudomonas aeruginosa quorum sensing signal molecules HHQ (2-heptyl-4-quinolone) and PQS (2-heptyl-3-hydroxy-4-quinolone) to anthranilic acid. Probably catalyzes the hydrolysis of N-octanoylanthranilic acid to anthranilic acid. This chain is Probable N-octanoylanthranilate hydrolase AqdA2, found in Rhodococcus erythropolis (Arthrobacter picolinophilus).